The following is a 485-amino-acid chain: UDP-N-acetylmuramate--L-alanine ligase (485 aa).

129–135 contacts ATP; sequence GTHGKTT.

This sequence belongs to the MurCDEF family.

It localises to the cytoplasm. The enzyme catalyses UDP-N-acetyl-alpha-D-muramate + L-alanine + ATP = UDP-N-acetyl-alpha-D-muramoyl-L-alanine + ADP + phosphate + H(+). It participates in cell wall biogenesis; peptidoglycan biosynthesis. Its function is as follows. Cell wall formation. The chain is UDP-N-acetylmuramate--L-alanine ligase from Vibrio parahaemolyticus serotype O3:K6 (strain RIMD 2210633).